Here is a 302-residue protein sequence, read N- to C-terminus: Formylmethanofuran--tetrahydromethanopterin formyltransferase (302 aa).

The protein belongs to the FTR family. In terms of assembly, homotetramer.

Its subcellular location is the cytoplasm. The catalysed reaction is N-formylmethanofuran + 5,6,7,8-tetrahydromethanopterin + H(+) = N(5)-formyl-5,6,7,8-tetrahydromethanopterin + methanofuran. It participates in one-carbon metabolism; formaldehyde degradation; formate from formaldehyde (H(4)MPT route): step 4/5. Functionally, catalyzes the transfer of a formyl group from 5-formyl tetrahydromethanopterin (5-formyl-H(4)MPT) to methanofuran (MFR) to produce formylmethanofuran (formyl-MFR) and tetrahydromethanopterin (H(4)MPT). The protein is Formylmethanofuran--tetrahydromethanopterin formyltransferase of Methylobacillus flagellatus (strain ATCC 51484 / DSM 6875 / VKM B-1610 / KT).